The primary structure comprises 93 residues: UPF0473 protein YrzB (93 aa).

It belongs to the UPF0473 family.

The polypeptide is UPF0473 protein YrzB (yrzB) (Bacillus subtilis (strain 168)).